The following is a 398-amino-acid chain: Elongation factor Tu (398 aa).

Residues 10–207 enclose the tr-type G domain; sequence KPHVNIGTIG…TVDEYIPEPE (198 aa). Residues 19–26 are G1; that stretch reads GHVDHGKT. 19-26 is a binding site for GTP; the sequence is GHVDHGKT. A Mg(2+)-binding site is contributed by threonine 26. Residues 63 to 67 form a G2 region; sequence GITIN. The interval 84–87 is G3; the sequence is DAPG. Residues 84–88 and 139–142 contribute to the GTP site; these read DAPGH and NKVD. Residues 139–142 form a G4 region; the sequence is NKVD. Residues 177–179 form a G5 region; sequence SAL.

It belongs to the TRAFAC class translation factor GTPase superfamily. Classic translation factor GTPase family. EF-Tu/EF-1A subfamily. As to quaternary structure, monomer.

It is found in the cytoplasm. The enzyme catalyses GTP + H2O = GDP + phosphate + H(+). In terms of biological role, GTP hydrolase that promotes the GTP-dependent binding of aminoacyl-tRNA to the A-site of ribosomes during protein biosynthesis. The protein is Elongation factor Tu of Streptococcus sanguinis (strain SK36).